Consider the following 284-residue polypeptide: Pantothenate synthetase (284 aa).

Position 30 to 37 (30 to 37) interacts with ATP; that stretch reads MGYLHEGH. Histidine 37 (proton donor) is an active-site residue. A (R)-pantoate-binding site is contributed by glutamine 61. Glutamine 61 is a binding site for beta-alanine. Residue 147 to 150 coordinates ATP; sequence GQKD. Glutamine 153 contributes to the (R)-pantoate binding site. Residues valine 176 and 184–187 each bind ATP; that span reads KSSR.

It belongs to the pantothenate synthetase family. As to quaternary structure, homodimer.

The protein localises to the cytoplasm. It catalyses the reaction (R)-pantoate + beta-alanine + ATP = (R)-pantothenate + AMP + diphosphate + H(+). It participates in cofactor biosynthesis; (R)-pantothenate biosynthesis; (R)-pantothenate from (R)-pantoate and beta-alanine: step 1/1. Its function is as follows. Catalyzes the condensation of pantoate with beta-alanine in an ATP-dependent reaction via a pantoyl-adenylate intermediate. This Lysinibacillus sphaericus (strain C3-41) protein is Pantothenate synthetase.